The following is a 491-amino-acid chain: Probable malate:quinone oxidoreductase (491 aa).

Belongs to the MQO family. FAD is required as a cofactor.

The catalysed reaction is (S)-malate + a quinone = a quinol + oxaloacetate. The protein operates within carbohydrate metabolism; tricarboxylic acid cycle; oxaloacetate from (S)-malate (quinone route): step 1/1. The protein is Probable malate:quinone oxidoreductase of Actinobacillus pleuropneumoniae serotype 7 (strain AP76).